We begin with the raw amino-acid sequence, 330 residues long: Ketol-acid reductoisomerase (NADP(+)) (330 aa).

Positions 3–184 (LPVYYDKDID…GGGRMGVLET (182 aa)) constitute a KARI N-terminal Rossmann domain. NADP(+)-binding positions include 26–29 (YGVQ), Ser52, and Ser54. His109 is a catalytic residue. Gly135 serves as a coordination point for NADP(+). A KARI C-terminal knotted domain is found at 185-329 (SFKEECESDL…EILRAPFNHK (145 aa)). Mg(2+) contacts are provided by Asp193, Glu197, Glu229, and Glu233. Ser254 is a substrate binding site.

It belongs to the ketol-acid reductoisomerase family. Mg(2+) serves as cofactor.

It catalyses the reaction (2R)-2,3-dihydroxy-3-methylbutanoate + NADP(+) = (2S)-2-acetolactate + NADPH + H(+). It carries out the reaction (2R,3R)-2,3-dihydroxy-3-methylpentanoate + NADP(+) = (S)-2-ethyl-2-hydroxy-3-oxobutanoate + NADPH + H(+). It participates in amino-acid biosynthesis; L-isoleucine biosynthesis; L-isoleucine from 2-oxobutanoate: step 2/4. The protein operates within amino-acid biosynthesis; L-valine biosynthesis; L-valine from pyruvate: step 2/4. Its function is as follows. Involved in the biosynthesis of branched-chain amino acids (BCAA). Catalyzes an alkyl-migration followed by a ketol-acid reduction of (S)-2-acetolactate (S2AL) to yield (R)-2,3-dihydroxy-isovalerate. In the isomerase reaction, S2AL is rearranged via a Mg-dependent methyl migration to produce 3-hydroxy-3-methyl-2-ketobutyrate (HMKB). In the reductase reaction, this 2-ketoacid undergoes a metal-dependent reduction by NADPH to yield (R)-2,3-dihydroxy-isovalerate. This Helicobacter pylori (strain J99 / ATCC 700824) (Campylobacter pylori J99) protein is Ketol-acid reductoisomerase (NADP(+)).